The following is a 181-amino-acid chain: Cytochrome c-type biogenesis protein CcmE (181 aa).

Topologically, residues 1 to 8 (MNPRRKSR) are cytoplasmic. Residues 9 to 29 (LKVVVLIMFSVAVAAGLTLYA) traverse the membrane as a helical; Signal-anchor for type II membrane protein segment. Residues 30 to 181 (LSQNIDLFYT…TFNTLQGESK (152 aa)) are Periplasmic-facing. Heme contacts are provided by His131 and Tyr135.

Belongs to the CcmE/CycJ family.

Its subcellular location is the cell inner membrane. Functionally, heme chaperone required for the biogenesis of c-type cytochromes. Transiently binds heme delivered by CcmC and transfers the heme to apo-cytochromes in a process facilitated by CcmF and CcmH. The sequence is that of Cytochrome c-type biogenesis protein CcmE from Haemophilus ducreyi (strain 35000HP / ATCC 700724).